A 147-amino-acid chain; its full sequence is FAD synthase (147 aa).

ATP contacts are provided by residues 13–14 (TF), 18–21 (HEGH), Asp100, and Phe127.

Belongs to the archaeal FAD synthase family. As to quaternary structure, homodimer. A divalent metal cation serves as cofactor.

It carries out the reaction FMN + ATP + H(+) = FAD + diphosphate. The protein operates within cofactor biosynthesis; FAD biosynthesis; FAD from FMN: step 1/1. In terms of biological role, catalyzes the transfer of the AMP portion of ATP to flavin mononucleotide (FMN) to produce flavin adenine dinucleotide (FAD) coenzyme. The protein is FAD synthase of Korarchaeum cryptofilum (strain OPF8).